Consider the following 136-residue polypeptide: Protein NrdI (136 aa).

The protein belongs to the NrdI family.

In terms of biological role, probably involved in ribonucleotide reductase function. In Klebsiella pneumoniae (strain 342), this protein is Protein NrdI.